Here is a 597-residue protein sequence, read N- to C-terminus: Probable HECT-type ubiquitin ligase-interacting protein creD (597 aa).

2 disordered regions span residues 375-398 (ELDP…GTLS) and 432-499 (LNIT…MATP). Basic and acidic residues predominate over residues 443-455 (TDHESQNDSEHRR). Residues 465-481 (PSSGSNSHSPSSPVLSR) show a composition bias toward low complexity. The span at 482–492 (RPSDEVDHEHV) shows a compositional bias: basic and acidic residues.

Belongs to the arrestin family. As to quaternary structure, interacts with hulA.

In terms of biological role, component of the regulatory network controlling carbon source utilization through ubiquitination and deubiquitination involving creA, creB, creC, creD and acrB. May be involved in signaling by recognizing appropriately phosphorylated substrates via its arrestin domains and then recruit a HECT-type ubiquitin ligase such as hulA, leading to ubiquitination of the substrate, providing a link between ubiquitination and phosphorylation in protein regulation and stability. The polypeptide is Probable HECT-type ubiquitin ligase-interacting protein creD (creD) (Aspergillus oryzae (strain ATCC 42149 / RIB 40) (Yellow koji mold)).